Reading from the N-terminus, the 154-residue chain is Myoglobin (154 aa).

Residues 2–148 (GLSDGEWQLV…FRNDMAAKYK (147 aa)) form the Globin domain. Residue S4 is modified to Phosphoserine. Residue H65 coordinates nitrite. H65 provides a ligand contact to O2. Position 68 is a phosphothreonine (T68). H94 lines the heme b pocket.

The protein belongs to the globin family. As to quaternary structure, monomeric.

It is found in the cytoplasm. It localises to the sarcoplasm. The enzyme catalyses Fe(III)-heme b-[protein] + nitric oxide + H2O = Fe(II)-heme b-[protein] + nitrite + 2 H(+). It carries out the reaction H2O2 + AH2 = A + 2 H2O. Functionally, monomeric heme protein which primary function is to store oxygen and facilitate its diffusion within muscle tissues. Reversibly binds oxygen through a pentacoordinated heme iron and enables its timely and efficient release as needed during periods of heightened demand. Depending on the oxidative conditions of tissues and cells, and in addition to its ability to bind oxygen, it also has a nitrite reductase activity whereby it regulates the production of bioactive nitric oxide. Under stress conditions, like hypoxia and anoxia, it also protects cells against reactive oxygen species thanks to its pseudoperoxidase activity. The protein is Myoglobin (MB) of Erythrocebus patas (Red guenon).